Consider the following 906-residue polypeptide: Aconitate hydratase A (906 aa).

The [4Fe-4S] cluster site is built by cysteine 443, cysteine 509, and cysteine 512.

Belongs to the aconitase/IPM isomerase family. As to quaternary structure, monomer. It depends on [4Fe-4S] cluster as a cofactor.

It catalyses the reaction citrate = D-threo-isocitrate. The catalysed reaction is (2S,3R)-3-hydroxybutane-1,2,3-tricarboxylate = 2-methyl-cis-aconitate + H2O. It functions in the pathway carbohydrate metabolism; tricarboxylic acid cycle; isocitrate from oxaloacetate: step 2/2. Its pathway is organic acid metabolism; propanoate degradation. Functionally, involved in the catabolism of short chain fatty acids (SCFA) via the tricarboxylic acid (TCA)(acetyl degradation route) and probably via the 2-methylcitrate cycle I (propionate degradation route). Catalyzes the reversible isomerization of citrate to isocitrate via cis-aconitate. Could catalyze the hydration of 2-methyl-cis-aconitate to yield (2R,3S)-2-methylisocitrate. The apo form of AcnA functions as a RNA-binding regulatory protein. This is Aconitate hydratase A from Bradyrhizobium diazoefficiens (strain JCM 10833 / BCRC 13528 / IAM 13628 / NBRC 14792 / USDA 110).